The chain runs to 452 residues: Trigger factor (452 aa).

One can recognise a PPIase FKBP-type domain in the interval 170–256; that stretch reads DSIVKVDFVE…IKSIKKRDLP (87 aa).

It belongs to the FKBP-type PPIase family. Tig subfamily.

It localises to the cytoplasm. The enzyme catalyses [protein]-peptidylproline (omega=180) = [protein]-peptidylproline (omega=0). In terms of biological role, involved in protein export. Acts as a chaperone by maintaining the newly synthesized protein in an open conformation. Functions as a peptidyl-prolyl cis-trans isomerase. The polypeptide is Trigger factor (Borreliella afzelii (strain PKo) (Borrelia afzelii)).